We begin with the raw amino-acid sequence, 352 residues long: Ion-translocating oxidoreductase complex subunit D (352 aa).

The next 4 membrane-spanning stretches (helical) occupy residues 20–40, 42–62, 69–91, and 123–143; these read IMLLVVIAALPGIAAQTWFFG, GTLFQIVLAAITALVAEAIVL, VASHLQDYSALLTGLLLAVSIPP, and PAMIGYVVLLISFPVQMTSWL. T187 carries the post-translational modification FMN phosphoryl threonine. 5 helical membrane passes run 215–235, 242–262, 267–287, 301–321, and 322–342; these read LAGVGWQWVNLAWLVGGVFLL, WHIPVSFLLTLALCAALGWLF, LASPQLHLLSGATMLGAFFIL, LIFGALAGVLVWLIRSFGGYP, and DGVAFAVLLANITVPLIDYYT.

The protein belongs to the NqrB/RnfD family. The complex is composed of six subunits: RsxA, RsxB, RsxC, RsxD, RsxE and RsxG. It depends on FMN as a cofactor.

Its subcellular location is the cell inner membrane. In terms of biological role, part of a membrane-bound complex that couples electron transfer with translocation of ions across the membrane. Required to maintain the reduced state of SoxR. The chain is Ion-translocating oxidoreductase complex subunit D from Salmonella dublin (strain CT_02021853).